We begin with the raw amino-acid sequence, 119 residues long: Holo-[acyl-carrier-protein] synthase (119 aa).

2 residues coordinate Mg(2+): Asp-5 and Glu-51.

Belongs to the P-Pant transferase superfamily. AcpS family. Requires Mg(2+) as cofactor.

The protein resides in the cytoplasm. It carries out the reaction apo-[ACP] + CoA = holo-[ACP] + adenosine 3',5'-bisphosphate + H(+). Functionally, transfers the 4'-phosphopantetheine moiety from coenzyme A to a Ser of acyl-carrier-protein. This Helicobacter pylori (strain J99 / ATCC 700824) (Campylobacter pylori J99) protein is Holo-[acyl-carrier-protein] synthase.